The primary structure comprises 291 residues: Phosphatidylserine decarboxylase proenzyme (291 aa).

Catalysis depends on charge relay system; for autoendoproteolytic cleavage activity residues aspartate 90, histidine 147, and serine 253. Serine 253 acts as the Schiff-base intermediate with substrate; via pyruvic acid; for decarboxylase activity in catalysis. The residue at position 253 (serine 253) is a Pyruvic acid (Ser); by autocatalysis.

Belongs to the phosphatidylserine decarboxylase family. PSD-B subfamily. Prokaryotic type I sub-subfamily. Heterodimer of a large membrane-associated beta subunit and a small pyruvoyl-containing alpha subunit. It depends on pyruvate as a cofactor. Is synthesized initially as an inactive proenzyme. Formation of the active enzyme involves a self-maturation process in which the active site pyruvoyl group is generated from an internal serine residue via an autocatalytic post-translational modification. Two non-identical subunits are generated from the proenzyme in this reaction, and the pyruvate is formed at the N-terminus of the alpha chain, which is derived from the carboxyl end of the proenzyme. The autoendoproteolytic cleavage occurs by a canonical serine protease mechanism, in which the side chain hydroxyl group of the serine supplies its oxygen atom to form the C-terminus of the beta chain, while the remainder of the serine residue undergoes an oxidative deamination to produce ammonia and the pyruvoyl prosthetic group on the alpha chain. During this reaction, the Ser that is part of the protease active site of the proenzyme becomes the pyruvoyl prosthetic group, which constitutes an essential element of the active site of the mature decarboxylase.

The protein localises to the cell membrane. It carries out the reaction a 1,2-diacyl-sn-glycero-3-phospho-L-serine + H(+) = a 1,2-diacyl-sn-glycero-3-phosphoethanolamine + CO2. It functions in the pathway phospholipid metabolism; phosphatidylethanolamine biosynthesis; phosphatidylethanolamine from CDP-diacylglycerol: step 2/2. Functionally, catalyzes the formation of phosphatidylethanolamine (PtdEtn) from phosphatidylserine (PtdSer). This Photobacterium profundum (strain SS9) protein is Phosphatidylserine decarboxylase proenzyme.